The primary structure comprises 212 residues: Cytidylate kinase (212 aa).

An ATP-binding site is contributed by glycine 7–threonine 15.

The protein belongs to the cytidylate kinase family. Type 1 subfamily.

Its subcellular location is the cytoplasm. It catalyses the reaction CMP + ATP = CDP + ADP. The enzyme catalyses dCMP + ATP = dCDP + ADP. This is Cytidylate kinase from Rhodopseudomonas palustris (strain BisB18).